Here is a 274-residue protein sequence, read N- to C-terminus: Small ribosomal subunit protein uS3 (274 aa).

The 69-residue stretch at 38–106 (IRRLLSSGLE…QVQLNILEVK (69 aa)) folds into the KH type-2 domain. The segment at 215–274 (AAAAPAGADRPRRERPSGTRPRRSGASGTTATGTDAGRAAGGEEAAPDAAAPVEAQSTES) is disordered. Low complexity predominate over residues 238-266 (SGASGTTATGTDAGRAAGGEEAAPDAAAP).

This sequence belongs to the universal ribosomal protein uS3 family. As to quaternary structure, part of the 30S ribosomal subunit. Forms a tight complex with proteins S10 and S14.

In terms of biological role, binds the lower part of the 30S subunit head. Binds mRNA in the 70S ribosome, positioning it for translation. This Mycobacterium tuberculosis (strain ATCC 25177 / H37Ra) protein is Small ribosomal subunit protein uS3.